A 175-amino-acid polypeptide reads, in one-letter code: uncharacterized protein (175 aa).

Disordered regions lie at residues 1–32 and 156–175; these read MSHK…KLRH and KQKQ…KYRQ. Low complexity predominate over residues 14 to 24; sequence LLSSSSPVAKK.

This is an uncharacterized protein from Mycoplasma pneumoniae (strain ATCC 29342 / M129 / Subtype 1) (Mycoplasmoides pneumoniae).